Here is a 1106-residue protein sequence, read N- to C-terminus: Inversin (1106 aa).

ANK repeat units lie at residues 13–42, 47–76, 80–110, 113–144, 148–177, 181–213, 220–250, 254–285, 288–317, 321–350, 356–385, 389–418, 422–451, 455–484, 488–517, and 523–553; these read SLASEVHAAAVNGDKSTLLKLIAGNSELKD, FGRTPLMYCVLADRVDCAEALLKAGADVNR, SRRTALHLAAQKGNYRFMKLLLARRGNWMQK, EGMTPLHLTTRHKSPKCLALLLKHMAPGEVDT, NKQTALHWSAYYNNPEHVKLLIKHDSNIGI, EGKIPLHWAANNKDPSAIHTVKCILEAAPTESL, EGRTPLHFAVADGNVAVVDVLTSYEGCNVTS, LFRTPLHWAALLGHAQIVHLLLERNKFGTIPS, QGATPLHYAAQSNFAETVEVFLKHPSVKDD, EGRTSFMWAAGKGSDNVIRTMLDLKLDIDI, YAGTALHAAALSGHVSTVKLLLERNAQVDA, MKHTPLFRACEMGHKEVIQTLIKGGARVDL, DGHSPLHWAALGGNADVCQILIENKINPNV, AGRTPLQCAAYGGYINCMVVLLENNADPNI, EGRTALHWLCNNGYLDAIKLLLGFDAFPNH, and ERYTPLDYALLGEHHEVIQFMLEHGALSIAA. The short motif at 490–498 is the D-box 1 element; it reads RTALHWLCN. Residues 555–584 enclose the IQ 1 domain; sequence QDIAAFKIQAVYKGYKVRKAFQERKNLLMK. Positions 589–607 are enriched in basic and acidic residues; the sequence is RKDAAAKKREEESKRKEAS. 4 disordered regions span residues 589–615, 636–688, 746–782, and 809–833; these read RKDAAAKKREEESKRKEASLQKGMQNM, LQLS…ELQS, ANGTSAHGNRRHASACGTAGAGEKTRDQSLSSSGNRG, and AVPKSKRHQQKSRHKEVNYERCSPA. Polar residues-rich tracts occupy residues 636–645 and 653–666; these read LQLSNKQTDL and VSASQIQLGRNSRG. Residues 812–822 are compositionally biased toward basic residues; that stretch reads KSKRHQQKSRH. Positions 944 to 952 match the D-box 2 motif; it reads RKELFRKKN. An IQ 2 domain is found at 951 to 980; that stretch reads KNYAATVIQRTWRSYRLRQELSQLLSAKRQ.

In terms of assembly, binds calmodulin via its IQ domains. Interacts with APC2.

It localises to the cytoplasm. The protein resides in the cytoskeleton. Its function is as follows. Required for normal renal development and establishment of left-right axis. Probably acts as a molecular switch between different Wnt signaling pathways. Inhibits the canonical Wnt pathway by targeting cytoplasmic disheveled for degradation by the ubiquitin-proteasome. This suggests that it is required in renal development to oppose the repression of terminal differentiation of tubular epithelial cells by Wnt signaling. The protein is Inversin (INVS) of Gallus gallus (Chicken).